A 742-amino-acid polypeptide reads, in one-letter code: Glycine--tRNA ligase (742 aa).

Residues 73-129 (KLAPLRAAVKEYGDLIRDLKAKGAPKIDIDKAVVELKARKRLLEDTEIALAPKEASF) enclose the WHEP-TRS domain. Glu309 contacts glycine. ATP is bound by residues 341–343 (RNE) and 352–353 (RV). Glu360 contacts glycine. 467-468 (EC) lines the ATP pocket. A glycine-binding site is contributed by 586 to 588 (EPS). Position 593 (Arg593) interacts with ATP.

Belongs to the class-II aminoacyl-tRNA synthetase family. As to quaternary structure, homodimer.

It is found in the cytoplasm. Its subcellular location is the cell projection. It localises to the axon. The protein localises to the secreted. The protein resides in the extracellular exosome. The catalysed reaction is tRNA(Gly) + glycine + ATP = glycyl-tRNA(Gly) + AMP + diphosphate. It carries out the reaction 2 ATP + H(+) = P(1),P(4)-bis(5'-adenosyl) tetraphosphate + diphosphate. Its function is as follows. Catalyzes the ATP-dependent ligation of glycine to the 3'-end of its cognate tRNA, via the formation of an aminoacyl-adenylate intermediate (Gly-AMP). Also produces diadenosine tetraphosphate (Ap4A), a universal pleiotropic signaling molecule needed for cell regulation pathways, by direct condensation of 2 ATPs. Thereby, may play a special role in Ap4A homeostasis. This is Glycine--tRNA ligase from Caenorhabditis elegans.